The following is a 438-amino-acid chain: tRNA modification GTPase MnmE (438 aa).

(6S)-5-formyl-5,6,7,8-tetrahydrofolate contacts are provided by R20, E76, and K115. The region spanning 210-370 (NFTIMILGRR…LKCFINKIVD (161 aa)) is the TrmE-type G domain. Residue N220 coordinates K(+). GTP-binding positions include 220-225 (NVGKST), 239-245 (TNIPGTT), and 264-267 (DTAG). Mg(2+) is bound at residue S224. Positions 239, 241, and 244 each coordinate K(+). Position 245 (T245) interacts with Mg(2+). K438 provides a ligand contact to (6S)-5-formyl-5,6,7,8-tetrahydrofolate.

Belongs to the TRAFAC class TrmE-Era-EngA-EngB-Septin-like GTPase superfamily. TrmE GTPase family. Homodimer. Heterotetramer of two MnmE and two MnmG subunits. K(+) serves as cofactor.

Its subcellular location is the cytoplasm. In terms of biological role, exhibits a very high intrinsic GTPase hydrolysis rate. Involved in the addition of a carboxymethylaminomethyl (cmnm) group at the wobble position (U34) of certain tRNAs, forming tRNA-cmnm(5)s(2)U34. In Carsonella ruddii (strain PV), this protein is tRNA modification GTPase MnmE.